Reading from the N-terminus, the 682-residue chain is Polyadenylate-binding protein 5 (682 aa).

RRM domains follow at residues 59–136 (SSLY…LSNR), 146–223 (GNVF…HFVR), 239–316 (TNVY…RAQK), and 342–419 (SNLY…LAQR). A PABC domain is found at 588–665 (TISKLASDLA…ALDVLRRSAD (78 aa)). Serine 600 carries the phosphoserine modification.

This sequence belongs to the polyadenylate-binding protein type-1 family. In terms of tissue distribution, expressed predominantly in immature flowers but also at lower levels in mature flowers and siliques. Detected in tapetum, pollen, ovules and developing seeds. Also detected in primary inflorescences and immature siliques.

The protein localises to the cytoplasm. The protein resides in the nucleus. In terms of biological role, binds the poly(A) tail of mRNA. Appears to be an important mediator of the multiple roles of the poly(A) tail in mRNA biogenesis, stability and translation. The chain is Polyadenylate-binding protein 5 (PAB5) from Arabidopsis thaliana (Mouse-ear cress).